The following is a 297-amino-acid chain: GTPase Era (297 aa).

The region spanning 7–174 (HSGFVSIIGR…VQVVRDLLPE (168 aa)) is the Era-type G domain. The tract at residues 15–22 (GRPNVGKS) is G1. 15–22 (GRPNVGKS) provides a ligand contact to GTP. The G2 stretch occupies residues 41–45 (QTTRN). The interval 62–65 (DTPG) is G3. GTP is bound by residues 62-66 (DTPGI) and 124-127 (NKVD). The G4 stretch occupies residues 124-127 (NKVD). The segment at 153 to 155 (VSA) is G5. The region spanning 205–282 (THDEVPYSVA…FLELFVRVSR (78 aa)) is the KH type-2 domain.

The protein belongs to the TRAFAC class TrmE-Era-EngA-EngB-Septin-like GTPase superfamily. Era GTPase family. Monomer.

The protein resides in the cytoplasm. It localises to the cell inner membrane. Its function is as follows. An essential GTPase that binds both GDP and GTP, with rapid nucleotide exchange. Plays a role in 16S rRNA processing and 30S ribosomal subunit biogenesis and possibly also in cell cycle regulation and energy metabolism. In Geotalea daltonii (strain DSM 22248 / JCM 15807 / FRC-32) (Geobacter daltonii), this protein is GTPase Era.